The chain runs to 274 residues: Orotidine 5'-phosphate decarboxylase (274 aa).

Residue Lys95 is the Proton donor of the active site.

Belongs to the OMP decarboxylase family. Type 2 subfamily.

The catalysed reaction is orotidine 5'-phosphate + H(+) = UMP + CO2. It functions in the pathway pyrimidine metabolism; UMP biosynthesis via de novo pathway; UMP from orotate: step 2/2. The polypeptide is Orotidine 5'-phosphate decarboxylase (Variovorax paradoxus (strain S110)).